The sequence spans 109 residues: Protein reprimo (109 aa).

Residues Asn7 and Asn18 are each glycosylated (N-linked (GlcNAc...) asparagine). The chain crosses the membrane as a helical span at residues 56 to 76; sequence VVQIAVMCVLSLTVVFGIFFL. Position 98 is a phosphoserine (Ser98).

The protein belongs to the reprimo family.

The protein resides in the cytoplasm. It localises to the membrane. Functionally, may be involved in the regulation of p53-dependent G2 arrest of the cell cycle. Seems to induce cell cycle arrest by inhibiting CDK1 activity and nuclear translocation of the CDC2 cyclin B1 complex. The chain is Protein reprimo (RPRM) from Bos taurus (Bovine).